A 1122-amino-acid chain; its full sequence is MRLLYFSMVLLWVLGASECQVIPSSRRTLRVGIAAAQDTQSGSIGWASCGGTLPIAVQYLKSKGFLTDFDVEYYMEYTECDRASVAKAGMKFMKEMNVDVVVGPSCGDALAIMGTLSAIYKKLVLGWGFVSDTQLADTNRFPYVASVQPTAQTLGLATSRILEMFQFDRVALLYYKDDQDYCKSVMDDVEATLSDPDLYPVRIVWKGELQSDNEALTRSTLQAVKSRARIVLLCAISGPEKRNYLISIAQQNMTTNEYVHILLTMRSIGYGVQTSLGKKTFANGLTPLWESFTVAPDGNETNARRAAEKMLVIDVNSDVQDAEFLQYLTKNIADAVRNPPMKCNTSECINASSTSMGSYARHLFDVFYLYGMAVSKLNSTDPTVYGNLNLLMPQMVTSFDGMTGRVQIGQNLYRVPTYQLYGLDEKYEQVALVNMTFYNSSSQLSRGYSDEGRSVWHFWDGTRPLDTPICGFSGRYCPVQFWDQYGVLIFVASIVLIFLICIMLMCFGFMIRGRRAEQERLNSEWQIPSIQLIMPQKEKRKPNSRRSLQSGPSTITGESKMTIDGGFHENYTVQMFEKDLVLTTKHHSMQMNKEEKEKFVKLRKLEHDNLNKFIGLSIDGPQFVAVWKMCSRGSLQDIIARGNFSMDGFFMFCIITDIAEGMNFLHKSFLHLHGNLRSATCLVNDSWQVKLTDFGLGALLEEHTPSKKRLLWAAPEVLRGSLTIHQMDPSADVYSFAIIASEILTKREAWDISNRKEGADEILYMVKKGGNRTIRPELILDAEVSPRLTTLVKDCWSEQPEDRPKAEQICKLLSEMTPRGNTNLMDHVFNMLEEYTSTLEVDIEERTKELTLEKKKADILLSRMLPKQVAERLKAGQTVEPEGFDTVTVLFSDVVKFTQLAAKCSPFQVVNLLNDLYSNFDTIIEEHGVYKVESIGDGYLCVSGLPTKNGYAHIKQIVDMSLKFMDYCKSFKVPHLPREKVELRIGINSGPCVAGVVGLSMPRYCLFGDTVNTASRMESNGKPSMIHMSEAAHSLLTDHYPHQYETSSRGEVIIKGKGVMETFWVLGKTDSDTKSLSTRTTPPITDENWPPQMKEDLKKRAVTPYPERQRSGKSKMDTLKVV.

The N-terminal stretch at 1-19 (MRLLYFSMVLLWVLGASEC) is a signal peptide. Residues 20-486 (QVIPSSRRTL…CPVQFWDQYG (467 aa)) lie on the Extracellular side of the membrane. N252, N299, N344, N350, N378, N434, and N439 each carry an N-linked (GlcNAc...) asparagine glycan. The chain crosses the membrane as a helical span at residues 487–507 (VLIFVASIVLIFLICIMLMCF). Residues 508–1122 (GFMIRGRRAE…KSKMDTLKVV (615 aa)) lie on the Cytoplasmic side of the membrane. Positions 536–562 (QKEKRKPNSRRSLQSGPSTITGESKMT) are disordered. Residues 542–830 (PNSRRSLQSG…NTNLMDHVFN (289 aa)) form the Protein kinase domain. The span at 545-559 (RRSLQSGPSTITGES) shows a compositional bias: polar residues. Residues 888-1018 (TVLFSDVVKF…DTVNTASRME (131 aa)) form the Guanylate cyclase domain. The tract at residues 1071-1122 (SDTKSLSTRTTPPITDENWPPQMKEDLKKRAVTPYPERQRSGKSKMDTLKVV) is disordered. Over residues 1074–1083 (KSLSTRTTPP) the composition is skewed to polar residues. Residues 1107–1122 (ERQRSGKSKMDTLKVV) show a composition bias toward basic and acidic residues.

The protein belongs to the adenylyl cyclase class-4/guanylyl cyclase family. Expressed in both ASEL and ASER neurons during early embryonic stages and becomes specifically expressed in ASER neuron in early larval stage.

Its subcellular location is the cell membrane. The catalysed reaction is GTP = 3',5'-cyclic GMP + diphosphate. In terms of biological role, guanylate cyclase involved in the production of the second messenger cGMP. Unlike other guanylate cyclases expressed in ASE neurons, may not play a role in chemotaxis responses to salt ions mediated by ASE sensory neurons. In Caenorhabditis elegans, this protein is Receptor-type guanylate cyclase gcy-5.